Consider the following 72-residue polypeptide: Putative snRNP Sm-like protein (72 aa).

In terms of domain architecture, Sm spans 4–72 (RPLDILNNAL…RGDNVVYVSP (69 aa)).

It belongs to the snRNP Sm proteins family.

The chain is Putative snRNP Sm-like protein from Methanosarcina barkeri (strain Fusaro / DSM 804).